The primary structure comprises 286 residues: uncharacterized protein (286 aa).

NADP(+) is bound by residues I54, N128, and K162. Residue S178 is the Proton donor of the active site. NADP(+)-binding residues include Y192, K196, I225, and T227. Y192 acts as the Proton acceptor in catalysis. Catalysis depends on K196, which acts as the Lowers pKa of active site Tyr.

The protein belongs to the short-chain dehydrogenases/reductases (SDR) family.

This is an uncharacterized protein from Schizosaccharomyces pombe (strain 972 / ATCC 24843) (Fission yeast).